Consider the following 1097-residue polypeptide: FHIP family protein GK23746 (1097 aa).

Over residues 1–21 (MSWLRSSPLRQSLTRTTSSGN) the composition is skewed to polar residues. A disordered region spans residues 1–25 (MSWLRSSPLRQSLTRTTSSGNGIRP). S491 carries the phosphoserine modification. Disordered regions lie at residues 639 to 684 (DVSA…SGRR), 820 to 856 (NENS…RSAY), and 932 to 1042 (NNQQ…SEPV). The segment covering 641–654 (SASSGNGTGSVVVG) has biased composition (low complexity). A Phosphoserine modification is found at S823. 2 stretches are compositionally biased toward low complexity: residues 824 to 852 (PLHQ…GAQQ) and 932 to 948 (NNQQ…SSSS). Residues 949–962 (AVTTCETSLSTQPH) are compositionally biased toward polar residues. The segment covering 973 to 985 (TTSSTISTSSGTT) has biased composition (low complexity). Gly residues predominate over residues 986–995 (AGSGGGGGSG). Composition is skewed to low complexity over residues 996-1006 (SNSSFSIGGST) and 1013-1022 (SNNTTNSSST).

It belongs to the FHIP family.

The protein is FHIP family protein GK23746 of Drosophila willistoni (Fruit fly).